A 124-amino-acid chain; its full sequence is Urease subunit beta (124 aa).

It belongs to the urease beta subunit family. Heterotrimer of UreA (gamma), UreB (beta) and UreC (alpha) subunits. Three heterotrimers associate to form the active enzyme.

It localises to the cytoplasm. It catalyses the reaction urea + 2 H2O + H(+) = hydrogencarbonate + 2 NH4(+). Its pathway is nitrogen metabolism; urea degradation; CO(2) and NH(3) from urea (urease route): step 1/1. This Ureaplasma urealyticum serovar 10 (strain ATCC 33699 / Western) protein is Urease subunit beta.